The primary structure comprises 281 residues: Nucleotide-binding protein PSHAa2554 (281 aa).

8-15 is an ATP binding site; it reads GRSGSGKS. 56–59 is a binding site for GTP; it reads DVRN.

It belongs to the RapZ-like family.

Its function is as follows. Displays ATPase and GTPase activities. The chain is Nucleotide-binding protein PSHAa2554 from Pseudoalteromonas translucida (strain TAC 125).